The primary structure comprises 912 residues: Eukaryotic translation initiation factor 3 subunit C (912 aa).

A disordered region spans residues 1–44; it reads MSRFFTTGSDSESESSLSGEELVTKPVGGNYGKQPLLLSEDEED. Low complexity predominate over residues 8-21; sequence GSDSESESSLSGEE. Serine 9, serine 11, serine 13, serine 15, serine 16, serine 18, and serine 39 each carry phosphoserine. N6-acetyllysine is present on lysine 99. Disordered stretches follow at residues 157–305 and 521–541; these read TNYK…RVRG and QLTPPEGSSKSEQDQAENEGE. 4 positions are modified to phosphoserine: serine 166, serine 178, serine 181, and serine 182. The segment covering 166–190 has biased composition (acidic residues); it reads SADEDAEKNEEDSEGSSDEDEDDDG. The segment covering 199-215 has biased composition (basic and acidic residues); the sequence is KKSEAPSGDSRKFLKKE. Positions 216-229 are enriched in acidic residues; it reads DEDEDSEESEDSEA. Residues 260–277 are compositionally biased toward basic and acidic residues; the sequence is PTTEEDKKAAEKKREDKA. A compositionally biased stretch (polar residues) spans 521–530; sequence QLTPPEGSSK. Phosphothreonine is present on threonine 523. Lysine 642 is subject to N6-acetyllysine. The PCI domain occupies 672–848; that stretch reads FHLHINLELL…QTVVMHRTEP (177 aa). Residues 884-912 are disordered; it reads FRDQKDGYRKNEGYMRRGGYRQQQSQTAY. The span at 885-898 shows a compositional bias: basic and acidic residues; sequence RDQKDGYRKNEGYM. Serine 908 is subject to Phosphoserine.

Belongs to the eIF-3 subunit C family. Component of the eukaryotic translation initiation factor 3 (eIF-3) complex, which is composed of 13 subunits: EIF3A, EIF3B, EIF3C, EIF3D, EIF3E, EIF3F, EIF3G, EIF3H, EIF3I, EIF3J, EIF3K, EIF3L and EIF3M. The eIF-3 complex appears to include 3 stable modules: module A is composed of EIF3A, EIF3B, EIF3G and EIF3I; module B is composed of EIF3F, EIF3H, and EIF3M; and module C is composed of EIF3C, EIF3D, EIF3E, EIF3K and EIF3L. EIF3C of module C binds EIF3B of module A and EIF3H of module B, thereby linking the three modules. EIF3J is a labile subunit that binds to the eIF-3 complex via EIF3B. The eIF-3 complex interacts with RPS6KB1 under conditions of nutrient depletion. Mitogenic stimulation leads to binding and activation of a complex composed of MTOR and RPTOR, leading to phosphorylation and release of RPS6KB1 and binding of EIF4B to eIF-3. Identified in a HCV IRES-mediated translation complex, at least composed of EIF3C, IGF2BP1, RPS3 and HCV RNA-replicon. Interacts with ALKBH4, IFIT1 and IFIT2. Interacts with BZW2/5MP1. Post-translationally, phosphorylated. Phosphorylation is enhanced upon serum stimulation.

It localises to the cytoplasm. Component of the eukaryotic translation initiation factor 3 (eIF-3) complex, which is required for several steps in the initiation of protein synthesis. The eIF-3 complex associates with the 40S ribosome and facilitates the recruitment of eIF-1, eIF-1A, eIF-2:GTP:methionyl-tRNAi and eIF-5 to form the 43S pre-initiation complex (43S PIC). The eIF-3 complex stimulates mRNA recruitment to the 43S PIC and scanning of the mRNA for AUG recognition. The eIF-3 complex is also required for disassembly and recycling of post-termination ribosomal complexes and subsequently prevents premature joining of the 40S and 60S ribosomal subunits prior to initiation. The eIF-3 complex specifically targets and initiates translation of a subset of mRNAs involved in cell proliferation, including cell cycling, differentiation and apoptosis, and uses different modes of RNA stem-loop binding to exert either translational activation or repression. The polypeptide is Eukaryotic translation initiation factor 3 subunit C (Bos taurus (Bovine)).